The primary structure comprises 827 residues: Villin-1 (827 aa).

The interval 1 to 126 (MTKLNAQVKG…IRKGGVASGM (126 aa)) is necessary for homodimerization. The core stretch occupies residues 1 to 734 (MTKLNAQVKG…YEDLKAELGN (734 aa)). A Gelsolin-like 1 repeat occupies 28–107 (QMVPVSSSTY…EVQGNESEAF (80 aa)). LPA/PIP2-binding site stretches follow at residues 112 to 119 (KQGIVIRK) and 138 to 146 (RLLHVKGKR). Gelsolin-like repeat units follow at residues 148 to 216 (VVAG…GEDE) and 269 to 342 (EVAT…SAVF). Phosphoserine is present on serine 366. Gelsolin-like repeat units follow at residues 409–489 (DLVP…PHLM), 528–595 (TKAF…ANFW), and 634–707 (TEIP…PPTF). Serine 735 carries the post-translational modification Phosphoserine. Residues 761–827 (SGPLPIFPLE…QNLKKEKGLF (67 aa)) form the HP domain. The interval 816–824 (KQQNLKKEK) is LPA/PIP2-binding site 3.

Belongs to the villin/gelsolin family. As to quaternary structure, monomer. Homodimer; homodimerization is necessary for actin-bundling. Associates with F-actin; phosphorylation at tyrosine residues decreases the association with F-actin. Interacts (phosphorylated at C-terminus tyrosine phosphorylation sites) with PLCG1 (via the SH2 domains). Interacts (phosphorylated form) with PLCG1; the interaction is enhanced by hepatocyte growth factor (HGF). Post-translationally, phosphorylated on tyrosine residues by SRC. The unphosphorylated form increases the initial rate of actin-nucleating activity, whereas the tyrosine-phosphorylated form inhibits actin-nucleating activity, enhances actin-bundling activity and enhances actin-severing activity by reducing high Ca(2+) requirements. The tyrosine-phosphorylated form does not regulate actin-capping activity. Tyrosine phosphorylation is essential for cell migration: tyrosine phosphorylation sites in the N-terminus half regulate actin reorganization and cell morphology, whereas tyrosine phosphorylation sites in the C-terminus half regulate cell migration. Tyrosine phosphorylation is induced by epidermal growth factor (EGF) and stimulates cell migration.

It localises to the cytoplasm. The protein resides in the cytoskeleton. It is found in the cell projection. Its subcellular location is the lamellipodium. The protein localises to the ruffle. It localises to the microvillus. The protein resides in the filopodium tip. It is found in the filopodium. Functionally, epithelial cell-specific Ca(2+)-regulated actin-modifying protein that modulates the reorganization of microvillar actin filaments. Plays a role in the actin nucleation, actin filament bundle assembly, actin filament capping and severing. Binds phosphatidylinositol 4,5-bisphosphate (PIP2) and lysophosphatidic acid (LPA); binds LPA with higher affinity than PIP2. Binding to LPA increases its phosphorylation by SRC and inhibits all actin-modifying activities. Binding to PIP2 inhibits actin-capping and -severing activities but enhances actin-bundling activity. Regulates the intestinal epithelial cell morphology, cell invasion, cell migration and apoptosis. Protects against apoptosis induced by dextran sodium sulfate (DSS) in the gastrointestinal epithelium. Appears to regulate cell death by maintaining mitochondrial integrity. Enhances hepatocyte growth factor (HGF)-induced epithelial cell motility, chemotaxis and wound repair. This is Villin-1 (VIL1) from Sus scrofa (Pig).